The chain runs to 689 residues: Calcium-responsive transcription factor (689 aa).

Disordered regions lie at residues 1 to 46 (MEQR…PTIL) and 541 to 609 (SPDG…SVPN). A compositionally biased stretch (basic and acidic residues) spans 13–29 (DGEKSEREAQGFEHRTC). Polar residues-rich tracts occupy residues 541-559 (SPDG…SSSP) and 578-601 (LGQS…SSTG).

As to expression, highly expressed in brain and testis.

Its subcellular location is the nucleus. Functionally, acts as a transcriptional activator that mediates the calcium- and neuron-selective induction of BDNF exon III transcription. Binds to the consensus calcium-response element CaRE1 5'-CTATTTCGAG-3' sequence. This Mus musculus (Mouse) protein is Calcium-responsive transcription factor (Carf).